Reading from the N-terminus, the 145-residue chain is Deoxyuridine 5'-triphosphate nucleotidohydrolase (145 aa).

Substrate is bound by residues 65-67, Asn-78, 82-84, and Lys-92; these read RSG and TID.

It belongs to the dUTPase family. Requires Mg(2+) as cofactor.

It catalyses the reaction dUTP + H2O = dUMP + diphosphate + H(+). It functions in the pathway pyrimidine metabolism; dUMP biosynthesis; dUMP from dCTP (dUTP route): step 2/2. Functionally, this enzyme is involved in nucleotide metabolism: it produces dUMP, the immediate precursor of thymidine nucleotides and it decreases the intracellular concentration of dUTP so that uracil cannot be incorporated into DNA. The protein is Deoxyuridine 5'-triphosphate nucleotidohydrolase of Syntrophomonas wolfei subsp. wolfei (strain DSM 2245B / Goettingen).